The primary structure comprises 274 residues: NAD kinase (274 aa).

Aspartate 59 functions as the Proton acceptor in the catalytic mechanism. NAD(+) is bound by residues 59–60, lysine 64, 128–129, aspartate 158, 169–174, and alanine 193; these read DG, ND, and TAYALS.

It belongs to the NAD kinase family. A divalent metal cation serves as cofactor.

It is found in the cytoplasm. The enzyme catalyses NAD(+) + ATP = ADP + NADP(+) + H(+). In terms of biological role, involved in the regulation of the intracellular balance of NAD and NADP, and is a key enzyme in the biosynthesis of NADP. Catalyzes specifically the phosphorylation on 2'-hydroxyl of the adenosine moiety of NAD to yield NADP. The polypeptide is NAD kinase (Petrotoga mobilis (strain DSM 10674 / SJ95)).